The primary structure comprises 657 residues: Glycogen debranching enzyme (657 aa).

Asp-336 serves as the catalytic Nucleophile. The active-site Proton donor is the Glu-371. Positions 458 to 467 (NEANGEENRD) are enriched in basic and acidic residues. A disordered region spans residues 458–479 (NEANGEENRDGTNNNYSNNHGK).

The protein belongs to the glycosyl hydrolase 13 family.

The enzyme catalyses Hydrolysis of (1-&gt;6)-alpha-D-glucosidic linkages to branches with degrees of polymerization of three or four glucose residues in limit dextrin.. It functions in the pathway glycan degradation; glycogen degradation. In terms of biological role, removes maltotriose and maltotetraose chains that are attached by 1,6-alpha-linkage to the limit dextrin main chain, generating a debranched limit dextrin. The protein is Glycogen debranching enzyme of Shigella sonnei (strain Ss046).